The chain runs to 211 residues: Imidazole glycerol phosphate synthase subunit HisH (211 aa).

In terms of domain architecture, Glutamine amidotransferase type-1 spans 1–211 (MIGIIDYGMG…VGIATGRGNG (211 aa)). C79 (nucleophile) is an active-site residue. Residues H186 and E188 contribute to the active site.

In terms of assembly, heterodimer of HisH and HisF.

The protein resides in the cytoplasm. The enzyme catalyses 5-[(5-phospho-1-deoxy-D-ribulos-1-ylimino)methylamino]-1-(5-phospho-beta-D-ribosyl)imidazole-4-carboxamide + L-glutamine = D-erythro-1-(imidazol-4-yl)glycerol 3-phosphate + 5-amino-1-(5-phospho-beta-D-ribosyl)imidazole-4-carboxamide + L-glutamate + H(+). It carries out the reaction L-glutamine + H2O = L-glutamate + NH4(+). Its pathway is amino-acid biosynthesis; L-histidine biosynthesis; L-histidine from 5-phospho-alpha-D-ribose 1-diphosphate: step 5/9. Functionally, IGPS catalyzes the conversion of PRFAR and glutamine to IGP, AICAR and glutamate. The HisH subunit catalyzes the hydrolysis of glutamine to glutamate and ammonia as part of the synthesis of IGP and AICAR. The resulting ammonia molecule is channeled to the active site of HisF. The chain is Imidazole glycerol phosphate synthase subunit HisH from Geobacillus kaustophilus (strain HTA426).